Here is a 356-residue protein sequence, read N- to C-terminus: DNA polymerase IV (356 aa).

In terms of domain architecture, UmuC spans 6-187 (IIHIDMDYFF…LDIGDFPGVG (182 aa)). Residues Asp10 and Asp105 each contribute to the Mg(2+) site. Glu106 is an active-site residue.

It belongs to the DNA polymerase type-Y family. As to quaternary structure, monomer. It depends on Mg(2+) as a cofactor.

Its subcellular location is the cytoplasm. The catalysed reaction is DNA(n) + a 2'-deoxyribonucleoside 5'-triphosphate = DNA(n+1) + diphosphate. Functionally, poorly processive, error-prone DNA polymerase involved in untargeted mutagenesis. Copies undamaged DNA at stalled replication forks, which arise in vivo from mismatched or misaligned primer ends. These misaligned primers can be extended by PolIV. Exhibits no 3'-5' exonuclease (proofreading) activity. May be involved in translesional synthesis, in conjunction with the beta clamp from PolIII. This Staphylococcus aureus (strain MRSA252) protein is DNA polymerase IV.